The primary structure comprises 310 residues: N-acetylmuramic acid 6-phosphate etherase (310 aa).

Positions 64–227 (ITARLKSKGR…STSVMIKLGK (164 aa)) constitute an SIS domain. Residue Glu-92 is the Proton donor of the active site. Residue Glu-123 is part of the active site.

Belongs to the GCKR-like family. MurNAc-6-P etherase subfamily. Homodimer.

The enzyme catalyses N-acetyl-D-muramate 6-phosphate + H2O = N-acetyl-D-glucosamine 6-phosphate + (R)-lactate. It participates in amino-sugar metabolism; N-acetylmuramate degradation. Specifically catalyzes the cleavage of the D-lactyl ether substituent of MurNAc 6-phosphate, producing GlcNAc 6-phosphate and D-lactate. In Prochlorococcus marinus (strain NATL1A), this protein is N-acetylmuramic acid 6-phosphate etherase.